The primary structure comprises 250 residues: 26S proteasome non-ATPase regulatory subunit 8 (250 aa).

Positions 63–233 (HDFETFDDYI…QEKPVNLDTV (171 aa)) constitute a PCI domain.

Belongs to the proteasome subunit S14 family.

In terms of biological role, acts as a regulatory subunit of the 26S proteasome which is involved in the ATP-dependent degradation of ubiquitinated proteins. The protein is 26S proteasome non-ATPase regulatory subunit 8 of Caenorhabditis elegans.